The sequence spans 466 residues: MAKGASISGFPEWLPAERVVEQRVIDTLREVFELNGFIGIETRAVEQGSSLLKKGETSKEIYLLSRLQEVGHESDIPVEQRLGLHFDLTVPLSRYVVEHSGALPFPFKRWQIQKVWRGERPQEGRFREFVQADIDVVGDGTLPSHYEVELPLVMVNALERLREFGLPKATVHANNRKLSEGFYRGLGLTDIEGVLREIDKLDKIGPQAVTDLLVETCGATEAQANACLELAQVTAEDGQELIEKFNGLCEIHHIPFDGDEYAMAKEGLDTLSMIIDEARRIRPGSVMADLKIARGLDYYTGSVYETFLEGASDLGSICSGGRYDNLATQGNRKYPGVGLSIGLSRLVSYMLHRAGATASRMSPACVLVAVWDEENRGDSNAIANTLRSRGIAADVAPTAAKLGKQIKYADKLGIPYVWFPNENPENDGSDEVKNIITGDQRPADAQSWQPDTVYAQQTVSINADNR.

Belongs to the class-II aminoacyl-tRNA synthetase family. As to quaternary structure, homodimer.

The protein localises to the cytoplasm. The enzyme catalyses tRNA(His) + L-histidine + ATP = L-histidyl-tRNA(His) + AMP + diphosphate + H(+). The chain is Histidine--tRNA ligase from Bifidobacterium animalis subsp. lactis (strain AD011).